Consider the following 364-residue polypeptide: Pyrimidine monooxygenase RutA (364 aa).

Residues 49–50, asparagine 115, glutamate 124, 140–141, and serine 190 contribute to the FMN site; these read IK and RY.

The protein belongs to the NtaA/SnaA/DszA monooxygenase family. RutA subfamily.

The enzyme catalyses uracil + FMNH2 + NADH + O2 = (Z)-3-ureidoacrylate + FMN + NAD(+) + H2O + H(+). It carries out the reaction thymine + FMNH2 + NADH + O2 = (Z)-2-methylureidoacrylate + FMN + NAD(+) + H2O + H(+). Catalyzes the pyrimidine ring opening between N-3 and C-4 by an unusual flavin hydroperoxide-catalyzed mechanism, adding oxygen atoms in the process to yield ureidoacrylate peracid, that immediately reacts with FMN forming ureidoacrylate and FMN-N(5)-oxide. The FMN-N(5)-oxide reacts spontaneously with NADH to produce FMN. Requires the flavin reductase RutF to regenerate FMN in vivo. This is Pyrimidine monooxygenase RutA from Methylorubrum extorquens (strain ATCC 14718 / DSM 1338 / JCM 2805 / NCIMB 9133 / AM1) (Methylobacterium extorquens).